Reading from the N-terminus, the 65-residue chain is Large ribosomal subunit protein bL35 (65 aa).

The disordered stretch occupies residues 1–25; the sequence is MPKMKSHRGAAKRFKKTGTGKLKRA.

It belongs to the bacterial ribosomal protein bL35 family.

This is Large ribosomal subunit protein bL35 from Clostridium botulinum (strain Eklund 17B / Type B).